Here is a 337-residue protein sequence, read N- to C-terminus: uncharacterized protein (337 aa).

Positions 12 to 60 (SLNYVDLPDTVHRKIFEYLNPWEIFKLSRISKAIHVTILKNKKFAVKDI) constitute an F-box domain.

This is an uncharacterized protein from Caenorhabditis elegans.